A 114-amino-acid polypeptide reads, in one-letter code: Small ribosomal subunit protein uS17 (114 aa).

This sequence belongs to the universal ribosomal protein uS17 family. In terms of assembly, part of the 30S ribosomal subunit.

Functionally, one of the primary rRNA binding proteins, it binds specifically to the 5'-end of 16S ribosomal RNA. The sequence is that of Small ribosomal subunit protein uS17 from Sulfolobus acidocaldarius (strain ATCC 33909 / DSM 639 / JCM 8929 / NBRC 15157 / NCIMB 11770).